The primary structure comprises 159 residues: Large ribosomal subunit protein uL11 (159 aa).

The disordered stretch occupies residues M1–P26.

It belongs to the universal ribosomal protein uL11 family. In terms of assembly, part of the ribosomal stalk of the 50S ribosomal subunit. Interacts with L10 and the large rRNA to form the base of the stalk. L10 forms an elongated spine to which L12 dimers bind in a sequential fashion forming a multimeric L10(L12)X complex.

In terms of biological role, forms part of the ribosomal stalk which helps the ribosome interact with GTP-bound translation factors. This Haloferax volcanii (strain ATCC 29605 / DSM 3757 / JCM 8879 / NBRC 14742 / NCIMB 2012 / VKM B-1768 / DS2) (Halobacterium volcanii) protein is Large ribosomal subunit protein uL11.